Consider the following 646-residue polypeptide: Peptidylprolyl isomerase domain and WD repeat-containing protein 1 (646 aa).

The tract at residues 1 to 50 (MATESGSDSQLRRRRRRDPEGSEKTELSEREPALAVAGSEENDDENEERW) is disordered. Alanine 2 is modified (N-acetylalanine). A compositionally biased stretch (basic and acidic residues) spans 17 to 32 (RDPEGSEKTELSEREP). WD repeat units follow at residues 88–126 (MHRD…IEFV), 131–170 (SHLG…MINM), 221–260 (LHVS…YKFP), and 278–319 (KCKA…RVFD). In terms of domain architecture, PPIase cyclophilin-type spans 490-645 (VSDSAIVHTS…EDVSIINITV (156 aa)).

This sequence belongs to the cyclophilin-type PPIase family. PPIL1 subfamily. As to quaternary structure, identified in the spliceosome C complex.

The protein localises to the nucleus. It catalyses the reaction [protein]-peptidylproline (omega=180) = [protein]-peptidylproline (omega=0). Inhibited by cyclosporin A (CsA). Its function is as follows. PPIase that catalyzes the cis-trans isomerization of proline imidic peptide bonds in oligopeptides and may therefore assist protein folding. May be involved in pre-mRNA splicing. The chain is Peptidylprolyl isomerase domain and WD repeat-containing protein 1 from Mus musculus (Mouse).